A 164-amino-acid polypeptide reads, in one-letter code: MD-2-related lipid-recognition protein 3 (164 aa).

Positions M1–G24 are cleaved as a signal peptide.

Interacts with RUB1/NEDD8. In terms of processing, neddylated. Post-translationally, ubiquitinated.

The protein resides in the vacuole. The protein localises to the endoplasmic reticulum. In terms of biological role, may be involved in herbivory-mediated responses. May play a role in herbivory-associated molecular pattern (HAMP) recognition. May function is jasmonate (JA) signaling in response to HAMP. May play a role in defense response against the pathogens Altenaria brassicicola and Pseudomonas syringae. The chain is MD-2-related lipid-recognition protein 3 from Arabidopsis thaliana (Mouse-ear cress).